Consider the following 958-residue polypeptide: Importin-13 (958 aa).

HEAT repeat units follow at residues 19–49, 51–83, 90–130, 137–174, 189–226, 231–263, 271–320, 325–367, 370–433, 435–471, 482–517, 519–553, 557–595, 598–643, 671–711, 715–749, 756–798, 810–840, 855–888, and 892–926; these read ENVE…QAQV, PQAW…RSPA, PDQY…LSMM, AVAD…EFQT, LAQE…SWVQ, LMDC…NAIS, VNTL…ALLD, WQSF…DDIL, EPDK…YEML, AELL…FQSI, VVPG…WLAD, PVMI…CREC, LPPY…LLSA, VEEI…SNLF, PVVV…VKTL, FAPM…VHIF, FPPI…ALKR, VKAL…TELL, ENGK…FALN, and FSYL…QQIL. The Importin N-terminal domain occupies 40–106; that stretch reads AQKWLMQAQV…KSQLFTHITR (67 aa).

This sequence belongs to the importin beta family.

It is found in the cytoplasm. The protein resides in the nucleus. In terms of biological role, functions in nuclear protein import as nuclear transport receptor. Serves as receptor for nuclear localization signals (NLS) in cargo substrates. Is thought to mediate docking of the importin/substrate complex to the nuclear pore complex (NPC) through binding to nucleoporin and the complex is subsequently translocated through the pore by an energy requiring, Ran-dependent mechanism. At the nucleoplasmic side of the NPC, Ran binds to the importin, the importin/substrate complex dissociates and importin is re-exported from the nucleus to the cytoplasm where GTP hydrolysis releases Ran. The directionality of nuclear import is thought to be conferred by an asymmetric distribution of the GTP- and GDP-bound forms of Ran between the cytoplasm and nucleus. The sequence is that of Importin-13 (IPO13) from Gallus gallus (Chicken).